The chain runs to 513 residues: Glutamate--tRNA ligase 2 (513 aa).

Positions 11–21 match the 'HIGH' region motif; sequence PSPTGFLHIGS. The short motif at 240-244 is the 'KMSKS' region element; it reads KLSKR. Lys243 contacts ATP.

The protein belongs to the class-I aminoacyl-tRNA synthetase family. Glutamate--tRNA ligase type 1 subfamily. In terms of assembly, monomer.

It localises to the cytoplasm. It catalyses the reaction tRNA(Glu) + L-glutamate + ATP = L-glutamyl-tRNA(Glu) + AMP + diphosphate. Its function is as follows. Catalyzes the attachment of glutamate to tRNA(Glu) in a two-step reaction: glutamate is first activated by ATP to form Glu-AMP and then transferred to the acceptor end of tRNA(Glu). The chain is Glutamate--tRNA ligase 2 from Rickettsia rickettsii (strain Iowa).